The chain runs to 202 residues: Heart- and neural crest derivatives-expressed protein 1 (202 aa).

The bHLH domain maps to 83-135 (RKGVGGPKKERRRTESINSAFAELRECIPNVPADTKLSKIKTLRLATSYIAYL). Residues 143–187 (SQPGEPEGFKAELKKADGRENKRKRETQPEVYSQPLAHGEKKLKG) are disordered. The segment covering 149–162 (EGFKAELKKADGRE) has biased composition (basic and acidic residues).

In terms of assembly, efficient DNA binding requires dimerization with another bHLH protein.

It is found in the nucleus. The protein localises to the nucleoplasm. The protein resides in the nucleolus. In terms of biological role, transcription factor. Plays an essential role in cardiac morphogenesis. In Gallus gallus (Chicken), this protein is Heart- and neural crest derivatives-expressed protein 1 (HAND1).